The following is a 1120-amino-acid chain: MTTQQEEQRSDTKNSKSESPSEVLVDTLDSKSNGSSDDDNIGQSEELSDKEIYTVEDRPPEYWAQRKKKFVLDVDPKYAKQKDKSDTYKRFKYLLGVTDLFRHFIGIKAKHDKNIQKLLKQLDSDANKLSKSHSTVSSSSRHHRKTEKEEDAELMADEEEEIVDTYQEDIFVSESPSFVKSGKLRDYQVQGLNWLISLHENKLSGILADEMGLGKTLQTISFLGYLRYVKQIEGPFLIIVPKSTLDNWRREFLKWTPNVNVLVLHGDKDTRADIVRNIILEARFDVLITSYEMVIREKNALKRLAWQYIVIDEAHRIKNEQSALSQIIRLFYSKNRLLITGTPLQNNLHELWALLNFLLPDIFGDSELFDEWFEQNNSEQDQEIVIQQLHSVLNPFLLRRVKADVEKSLLPKIETNVYVGMTDMQIQWYKSLLEKDIDAVNGAVGKREGKTRLLNIVMQLRKCCNHPYLFEGAEPGPPYTTDEHLIFNSGKMIILDKLLKRLKEKGSRVLIFSQMSRLLDILEDYCYFRDFEYCRIDGSTSHEERIEAIDEYNKPNSEKFVFLLTTRAGGLGINLVTADTVILFDSDWNPQADLQAMDRAHRIGQKKQVHVYRFVTENAIEEKVIERAAQKLRLDQLVIQQGTGKKTASLGNSKDDLLDMIQFGAKNMFEKKASKVTVDADIDDILKKGEQKTQELNAKYQSLGLDDLQKFNGIENQSAYEWNGKSFQKKSNDKVVEWINPSRRERRREQTTYSVDDYYKEIIGGGSKSASKQTPQPKAPRAPKVIHGQDFQFFPKELDALQEKEQLYFKKKVNYKVTSYDITGDIRNEGSDAEEEEGEYKNAANTEGHKGHEELKRRIEEEQEKINSAPDFTQEDELRKQELISKAFTNWNKRDFMAFINACAKYGRDDMENIKKSIDSKTPEEVEVYAKIFWERLKEINGWEKYLHNVELGEKKNEKLKFQETLLRQKIEQCKHPLHELIIQYPPNNARRTYNTLEDKFLLLAVNKYGLRADKLYEKLKQEIMMSDLFTFDWFIKTRTVHELSKRVHTLLTLIVREYEQPDANKKKRSRTSATREDTPLSQNESTRASTVPNLPTTMVTNQKDTNDHVDKRTKIDQEA.

The span at 1–16 (MTTQQEEQRSDTKNSK) shows a compositional bias: basic and acidic residues. 2 disordered regions span residues 1–58 (MTTQ…VEDR) and 129–153 (LSKS…EDAE). Ser17 and Ser19 each carry phosphoserine. Residues 47–58 (LSDKEIYTVEDR) are compositionally biased toward basic and acidic residues. A Helicase ATP-binding domain is found at 196-361 (ISLHENKLSG…WALLNFLLPD (166 aa)). Residue 209–216 (DEMGLGKT) coordinates ATP. The short motif at 312–315 (DEAH) is the DEAH box element. A Helicase C-terminal domain is found at 494-645 (ILDKLLKRLK…QLVIQQGTGK (152 aa)). 2 disordered regions span residues 764–783 (GGGS…PRAP) and 828–853 (NEGS…KGHE). Ser831 carries the post-translational modification Phosphoserine. The SANT domain occupies 886–938 (KAFTNWNKRDFMAFINACAKYGRDDMENIKKSIDSKTPEEVEVYAKIFWERLK). The tract at residues 1062–1120 (PDANKKKRSRTSATREDTPLSQNESTRASTVPNLPTTMVTNQKDTNDHVDKRTKIDQEA) is disordered. The residue at position 1079 (Thr1079) is a Phosphothreonine. Positions 1080–1104 (PLSQNESTRASTVPNLPTTMVTNQK) are enriched in polar residues. Ser1082 carries the post-translational modification Phosphoserine. The segment covering 1105 to 1120 (DTNDHVDKRTKIDQEA) has biased composition (basic and acidic residues).

The protein belongs to the SNF2/RAD54 helicase family. ISWI subfamily. As to quaternary structure, component of the ISW2 complex, which at least consists of ISW2, ITC1, DLS1 and DPB4. May form a stable subcomplex with ITC1.

The protein localises to the nucleus. Catalytic component of the ISW2 complex, which acts in remodeling the chromatin by catalyzing an ATP-dependent alteration in the structure of nucleosomal DNA. The ISW2 complex is involved in coordinating transcriptional repression and in inheritance of telomeric silencing. It is involved in repression of MAT a-specific genes, INO1, and early meiotic genes during mitotic growth dependent upon transcription factor UME6 and in a parallel pathway to the RPD3-SIN3 histone deacetylase complex. The protein is ISWI chromatin-remodeling complex ATPase ISW2 (ISW2) of Saccharomyces cerevisiae (strain ATCC 204508 / S288c) (Baker's yeast).